The chain runs to 220 residues: MLAKQRFVLDTTAFTDNQLRELLGDGDLNLSVDRMLDLIARSRIKLNISCHMPPITYKEFTDYMTRYDCPEETLIKAETWIVKKTPNRYDTQIPSQIFYEYVHDIRERMNKGLRISETLLWEAGIQSIIMASRDVKKTEIESEVLGKAIKDLRKKYRSALRKGTLDSAPDLDVLLLAKELGAGVVAADDGIRVWAERLGLRFLNATSFPKMLKEYLKYYE.

It belongs to the HARP family.

It catalyses the reaction Endonucleolytic cleavage of RNA, removing 5'-extranucleotides from tRNA precursor.. Its function is as follows. RNA-free RNase P that catalyzes the removal of the 5'-leader sequence from pre-tRNA to produce the mature 5'-terminus. This Methanothermobacter thermautotrophicus (strain ATCC 29096 / DSM 1053 / JCM 10044 / NBRC 100330 / Delta H) (Methanobacterium thermoautotrophicum) protein is RNA-free ribonuclease P.